We begin with the raw amino-acid sequence, 206 residues long: Ras-related protein RABG3d (206 aa).

GTP is bound at residue 15-22; that stretch reads GDSGVGKT. An Effector region motif is present at residues 37–45; it reads YKATIGADF. GTP contacts are provided by residues 63–67, 125–128, and 158–159; these read DTAGQ, NKTD, and SA. S-geranylgeranyl cysteine attachment occurs at residues C204 and C206. Cysteine methyl ester is present on C206.

This sequence belongs to the small GTPase superfamily. Rab family.

The protein localises to the cell membrane. Intracellular vesicle trafficking and protein transport. The protein is Ras-related protein RABG3d (RABG3D) of Arabidopsis thaliana (Mouse-ear cress).